The following is a 900-amino-acid chain: DNA polymerase nu (900 aa).

Residues 60–75 show a composition bias toward basic and acidic residues; sequence LEDRKTQSPEKKDLKS. Disordered regions lie at residues 60–90 and 863–900; these read LEDRKTQSPEKKDLKSLRSQTSRGSAKLSPQ and GPPPGPCRTESPSNSLAAPGSPASTQPPPLHFSPSFCL. Over residues 76-90 the composition is skewed to polar residues; sequence LRSQTSRGSAKLSPQ.

Belongs to the DNA polymerase type-A family. In terms of assembly, interacts with FANCD2, FANCI, PCNA, RAD51 and HELQ. In terms of tissue distribution, highly expressed in testis and heart. Weakly expressed in skeletal muscle.

The protein localises to the nucleus. It carries out the reaction DNA(n) + a 2'-deoxyribonucleoside 5'-triphosphate = DNA(n+1) + diphosphate. Inhibited by ddTTP. Its function is as follows. DNA polymerase with very low fidelity that catalyzes considerable misincorporation by inserting dTTP opposite a G template, and dGTP opposite a T template. Is the least accurate of the DNA polymerase A family (i.e. POLG, POLN and POLQ). Can perform accurate translesion DNA synthesis (TLS) past a 5S-thymine glycol. Can perform efficient strand displacement past a nick or a gap and gives rise to an amount of product similar to that on non-damaged template. Has no exonuclease activity. Error-prone DNA polymerase that preferentially misincorporates dT regardless of template sequence. May play a role in TLS during interstrand cross-link (ICL) repair. May be involved in TLS when genomic replication is blocked by extremely large major groove DNA lesions. May function in the bypass of some DNA-protein and DNA-DNA cross-links. May have a role in cellular tolerance to DNA cross-linking agents. Involved in the repair of DNA cross-links and double-strand break (DSB) resistance. Participates in FANCD2-mediated repair. Forms a complex with HELQ helicase that participates in homologous recombination (HR) repair and is essential for cellular protection against DNA cross-links. This chain is DNA polymerase nu (POLN), found in Homo sapiens (Human).